We begin with the raw amino-acid sequence, 147 residues long: Delta-latroinsectotoxin-Lhe1a (147 aa).

4 ANK repeats span residues 57-59, 66-78, 79-96, and 98-125; these read VSI, NNWT…IYFK, KNPA…DIEA, and TSIM…TLDE.

Belongs to the cationic peptide 01 (latrotoxin) family. 04 (delta-latroinsectotoxin) subfamily. Homotetramer in membrane. Expressed by the venom gland.

The protein resides in the secreted. Its subcellular location is the target cell membrane. Its function is as follows. Insecticidal presynaptic neurotoxin that induces massive neurotransmitter release at insect (but not vertebrate) neuromuscular junctions. Native toxin forms cation-permeable pores (with high permeability to calcium) in lipid membranes locust muscle membrane and artificial lipid bilayers. May bind to insect neurexin-1 homolog, insect adhesion G protein-coupled receptor L1 homolog, and insect receptor-type tyrosine-protein phosphatase S homolog, and induces neurotransmitter exocytosis both by forming tetrameric pores in membranes and signaling via G protein-coupled receptor. Oligomerization is a process independent of divalent cations. This chain is Delta-latroinsectotoxin-Lhe1a, found in Latrodectus hesperus (Western black widow spider).